The primary structure comprises 182 residues: Chromophore lyase CpcS/CpeS (182 aa).

It belongs to the CpcS/CpeS biliprotein lyase family.

Its function is as follows. Covalently attaches a chromophore to Cys residue(s) of phycobiliproteins. The sequence is that of Chromophore lyase CpcS/CpeS from Thermosynechococcus vestitus (strain NIES-2133 / IAM M-273 / BP-1).